The following is a 106-amino-acid chain: Phosphoribosyl-ATP pyrophosphatase (106 aa).

It belongs to the PRA-PH family.

The protein resides in the cytoplasm. The enzyme catalyses 1-(5-phospho-beta-D-ribosyl)-ATP + H2O = 1-(5-phospho-beta-D-ribosyl)-5'-AMP + diphosphate + H(+). The protein operates within amino-acid biosynthesis; L-histidine biosynthesis; L-histidine from 5-phospho-alpha-D-ribose 1-diphosphate: step 2/9. This chain is Phosphoribosyl-ATP pyrophosphatase, found in Methylobacillus flagellatus (strain ATCC 51484 / DSM 6875 / VKM B-1610 / KT).